A 148-amino-acid polypeptide reads, in one-letter code: Lysozyme C (148 aa).

The signal sequence occupies residues 1–18 (MKVLVILGLVLLSVMVQG). In terms of domain architecture, C-type lysozyme spans 19–148 (KVFERCELAR…VSQYVQGCGV (130 aa)). Cystine bridges form between C24/C146, C48/C134, C83/C99, and C95/C113. Active-site residues include E53 and D71.

Belongs to the glycosyl hydrolase 22 family. In terms of assembly, monomer.

It is found in the secreted. It catalyses the reaction Hydrolysis of (1-&gt;4)-beta-linkages between N-acetylmuramic acid and N-acetyl-D-glucosamine residues in a peptidoglycan and between N-acetyl-D-glucosamine residues in chitodextrins.. Its function is as follows. Lysozymes have primarily a bacteriolytic function; those in tissues and body fluids are associated with the monocyte-macrophage system and enhance the activity of immunoagents. The protein is Lysozyme C (LYZ) of Saimiri sciureus (Common squirrel monkey).